Here is a 125-residue protein sequence, read N- to C-terminus: Small ribosomal subunit protein eS8 (125 aa).

The disordered stretch occupies residues 1–35 (MQWQGRSVRKPSGGRYHTSQGKKRTEIGRAPAETH).

It belongs to the eukaryotic ribosomal protein eS8 family. Part of the 30S ribosomal subunit.

The sequence is that of Small ribosomal subunit protein eS8 from Methanoculleus marisnigri (strain ATCC 35101 / DSM 1498 / JR1).